Reading from the N-terminus, the 321-residue chain is Ferredoxin--NADP reductase (321 aa).

Residues Glu-33, Gln-41, Tyr-46, Val-86, Leu-119, Asp-277, and Ser-318 each coordinate FAD.

The protein belongs to the ferredoxin--NADP reductase type 2 family. As to quaternary structure, homodimer. Requires FAD as cofactor.

The catalysed reaction is 2 reduced [2Fe-2S]-[ferredoxin] + NADP(+) + H(+) = 2 oxidized [2Fe-2S]-[ferredoxin] + NADPH. In Lactococcus lactis subsp. lactis (strain IL1403) (Streptococcus lactis), this protein is Ferredoxin--NADP reductase.